We begin with the raw amino-acid sequence, 324 residues long: DNA-directed RNA polymerase subunit alpha (324 aa).

The tract at residues M1–S228 is alpha N-terminal domain (alpha-NTD). Positions R245–K324 are alpha C-terminal domain (alpha-CTD).

The protein belongs to the RNA polymerase alpha chain family. As to quaternary structure, homodimer. The RNAP catalytic core consists of 2 alpha, 1 beta, 1 beta' and 1 omega subunit. When a sigma factor is associated with the core the holoenzyme is formed, which can initiate transcription.

The enzyme catalyses RNA(n) + a ribonucleoside 5'-triphosphate = RNA(n+1) + diphosphate. Functionally, DNA-dependent RNA polymerase catalyzes the transcription of DNA into RNA using the four ribonucleoside triphosphates as substrates. This chain is DNA-directed RNA polymerase subunit alpha, found in Caldicellulosiruptor saccharolyticus (strain ATCC 43494 / DSM 8903 / Tp8T 6331).